Here is a 144-residue protein sequence, read N- to C-terminus: Large ribosomal subunit protein uL15 (144 aa).

A disordered region spans residues 1-57; it reads MLLNTLSPAAGSKHAPKRLGRGVGSGLGKTGGRGHKGQKSRSGGKVRPGFEGGQMPL. Positions 21-31 are enriched in gly residues; sequence RGVGSGLGKTG. Residues 32-44 show a composition bias toward basic residues; sequence GRGHKGQKSRSGG.

It belongs to the universal ribosomal protein uL15 family. In terms of assembly, part of the 50S ribosomal subunit.

Functionally, binds to the 23S rRNA. The sequence is that of Large ribosomal subunit protein uL15 from Vibrio cholerae serotype O1 (strain ATCC 39541 / Classical Ogawa 395 / O395).